A 579-amino-acid polypeptide reads, in one-letter code: Putative laccase-9 (579 aa).

A signal peptide spans Met1 to Gly27. 2 consecutive Plastocyanin-like domains span residues Phe36–Gly152 and Lys162–Ser319. N-linked (GlcNAc...) asparagine glycosylation is found at Asn41 and Asn82. Positions 86 and 88 each coordinate Cu cation. Asn114 is a glycosylation site (N-linked (GlcNAc...) asparagine). Cu cation contacts are provided by His131 and His133. N-linked (GlcNAc...) asparagine glycosylation is found at Asn307, Asn405, and Asn446. The 128-residue stretch at Pro436–Lys563 folds into the Plastocyanin-like 3 domain. Cu cation is bound by residues His480, His483, and His485. The N-linked (GlcNAc...) asparagine glycan is linked to Asn496. Residues His542, Cys543, His544, His548, and Met553 each coordinate Cu cation.

It belongs to the multicopper oxidase family. Cu cation serves as cofactor.

It localises to the secreted. Its subcellular location is the extracellular space. The protein localises to the apoplast. The enzyme catalyses 4 hydroquinone + O2 = 4 benzosemiquinone + 2 H2O. Lignin degradation and detoxification of lignin-derived products. This chain is Putative laccase-9 (LAC9), found in Oryza sativa subsp. japonica (Rice).